The sequence spans 1067 residues: FHIP family protein GL19323 (1067 aa).

The span at 1–11 (MSWLRSSPLRQ) shows a compositional bias: polar residues. Disordered stretches follow at residues 1 to 31 (MSWL…GSLR), 503 to 525 (LARP…QPIQ), and 832 to 1013 (NENS…SEPA). Ser508 and Ser835 each carry phosphoserine. Residues 842-858 (QPQTTLSQQQQQQQGQQ) show a composition bias toward low complexity. The span at 859–878 (RSAYATLSAATPVQATQTSA) shows a compositional bias: polar residues. Over residues 893–904 (SKSISSMFSRRS) the composition is skewed to low complexity. Residues 918–949 (LVGNNNSGSGQSQPFSSTGTGTCETSLSTNPQ) show a composition bias toward polar residues. Residues 950-979 (SGAAAARSTGTATTANGNSSNSNISIGGST) are compositionally biased toward low complexity. Residues 980-996 (QTLSGHSNTTTYSSSTL) are compositionally biased toward polar residues.

Belongs to the FHIP family.

This chain is FHIP family protein GL19323, found in Drosophila persimilis (Fruit fly).